Here is a 282-residue protein sequence, read N- to C-terminus: Blarina toxin (282 aa).

The signal sequence occupies residues 1 to 17; it reads MCFLLLCLTLTLAGTGA. Residues 18–29 constitute a propeptide, activation peptide; sequence VPTGPSIEIHSR. Residues 30-279 enclose the Peptidase S1 domain; the sequence is IIGGWECDKH…YISWIQETIK (250 aa). Cystine bridges form between Cys36-Cys194, Cys57-Cys73, Cys170-Cys240, Cys205-Cys219, and Cys230-Cys255. His72 functions as the Charge relay system in the catalytic mechanism. An O-linked (GalNAc...) serine glycan is attached at Ser100. N-linked (GlcNAc...) asparagine glycans are attached at residues Asn109 and Asn122. The active-site Charge relay system is Asp138. Catalysis depends on Ser234, which acts as the Charge relay system.

Belongs to the peptidase S1 family. Kallikrein subfamily. As to expression, submaxillary and sublingual salivary glands.

It localises to the secreted. Its activity is regulated as follows. Strongly inhibited by aprotinin, moderately inhibited by secretory leukoprotease inhibitor, the Kunitz-type soybean trypsin inhibitor, and leupeptin, and not inhibited by urinary trypsin inhibitor or alpha-1 protease inhibitor. Has kallikrein-like activity, converts kininogens to kinins, and has dilatory effects on the blood vessel walls. Shows highest activity toward Pro-Phe-Arg-MCA and Boc-Val-Leu-Lys-MCA in vitro. Has preference for Arg and Lys in position P1 and hydrophobic residues in position P2. The protein is Blarina toxin (BTX) of Blarina brevicauda (Northern short-tailed shrew).